Consider the following 307-residue polypeptide: ATP synthase gamma chain (307 aa).

It belongs to the ATPase gamma chain family. As to quaternary structure, F-type ATPases have 2 components, CF(1) - the catalytic core - and CF(0) - the membrane proton channel. CF(1) has five subunits: alpha(3), beta(3), gamma(1), delta(1), epsilon(1). CF(0) has three main subunits: a, b and c.

It localises to the cell membrane. Functionally, produces ATP from ADP in the presence of a proton gradient across the membrane. The gamma chain is believed to be important in regulating ATPase activity and the flow of protons through the CF(0) complex. This Bifidobacterium longum subsp. infantis (strain ATCC 15697 / DSM 20088 / JCM 1222 / NCTC 11817 / S12) protein is ATP synthase gamma chain.